Here is a 32-residue protein sequence, read N- to C-terminus: Alpha-2-macroglobulin homolog (32 aa).

The isoglutamyl cysteine thioester (Cys-Gln) cross-link spans 16–19 (CGEQ).

The protein belongs to the protease inhibitor I39 (alpha-2-macroglobulin) family. As to quaternary structure, homodimer; disulfide-linked.

The protein localises to the secreted. Functionally, is able to inhibit all four classes of proteinases by a unique 'trapping' mechanism. This protein has a peptide stretch, called the 'bait region' which contains specific cleavage sites for different proteinases. When a proteinase cleaves the bait region, a conformational change is induced in the protein which traps the proteinase. The entrapped enzyme remains active against low molecular weight substrates (activity against high molecular weight substrates is greatly reduced). Following cleavage in the bait region a thioester bond is hydrolyzed and mediates the covalent binding of the protein to the proteinase. This chain is Alpha-2-macroglobulin homolog, found in Pacifastacus leniusculus (Signal crayfish).